Consider the following 465-residue polypeptide: ATP synthase subunit beta 2 (465 aa).

An ATP-binding site is contributed by 148–155 (GGAGVGKT).

The protein belongs to the ATPase alpha/beta chains family. F-type ATPases have 2 components, CF(1) - the catalytic core - and CF(0) - the membrane proton channel. CF(1) has five subunits: alpha(3), beta(3), gamma(1), delta(1), epsilon(1). CF(0) has three main subunits: a(1), b(2) and c(9-12). The alpha and beta chains form an alternating ring which encloses part of the gamma chain. CF(1) is attached to CF(0) by a central stalk formed by the gamma and epsilon chains, while a peripheral stalk is formed by the delta and b chains.

The protein resides in the cell inner membrane. The enzyme catalyses ATP + H2O + 4 H(+)(in) = ADP + phosphate + 5 H(+)(out). Its function is as follows. Produces ATP from ADP in the presence of a proton gradient across the membrane. The catalytic sites are hosted primarily by the beta subunits. The chain is ATP synthase subunit beta 2 from Psychromonas ingrahamii (strain DSM 17664 / CCUG 51855 / 37).